Reading from the N-terminus, the 405-residue chain is Arginine biosynthesis bifunctional protein ArgJ (405 aa).

Positions 152, 178, 189, 276, 400, and 405 each coordinate substrate. Thr189 acts as the Nucleophile in catalysis.

It belongs to the ArgJ family. As to quaternary structure, heterotetramer of two alpha and two beta chains.

It localises to the cytoplasm. The enzyme catalyses N(2)-acetyl-L-ornithine + L-glutamate = N-acetyl-L-glutamate + L-ornithine. It carries out the reaction L-glutamate + acetyl-CoA = N-acetyl-L-glutamate + CoA + H(+). It functions in the pathway amino-acid biosynthesis; L-arginine biosynthesis; L-ornithine and N-acetyl-L-glutamate from L-glutamate and N(2)-acetyl-L-ornithine (cyclic): step 1/1. Its pathway is amino-acid biosynthesis; L-arginine biosynthesis; N(2)-acetyl-L-ornithine from L-glutamate: step 1/4. Functionally, catalyzes two activities which are involved in the cyclic version of arginine biosynthesis: the synthesis of N-acetylglutamate from glutamate and acetyl-CoA as the acetyl donor, and of ornithine by transacetylation between N(2)-acetylornithine and glutamate. In Pseudomonas syringae pv. syringae (strain B728a), this protein is Arginine biosynthesis bifunctional protein ArgJ.